A 302-amino-acid polypeptide reads, in one-letter code: Oxygen-dependent coproporphyrinogen-III oxidase (302 aa).

S94 lines the substrate pocket. Positions 98 and 108 each coordinate a divalent metal cation. The active-site Proton donor is the H108. 110–112 (NVR) contacts substrate. Residues H147 and H177 each contribute to the a divalent metal cation site. Positions 242–277 (YVEFNLVYDRGTLFGLQTGGRTESILMSMPPLVRWQ) are important for dimerization. Residue 260 to 262 (GGR) coordinates substrate.

It belongs to the aerobic coproporphyrinogen-III oxidase family. As to quaternary structure, homodimer. A divalent metal cation is required as a cofactor.

Its subcellular location is the cytoplasm. The enzyme catalyses coproporphyrinogen III + O2 + 2 H(+) = protoporphyrinogen IX + 2 CO2 + 2 H2O. The protein operates within porphyrin-containing compound metabolism; protoporphyrin-IX biosynthesis; protoporphyrinogen-IX from coproporphyrinogen-III (O2 route): step 1/1. Involved in the heme biosynthesis. Catalyzes the aerobic oxidative decarboxylation of propionate groups of rings A and B of coproporphyrinogen-III to yield the vinyl groups in protoporphyrinogen-IX. This Shewanella baltica (strain OS155 / ATCC BAA-1091) protein is Oxygen-dependent coproporphyrinogen-III oxidase.